The following is a 194-amino-acid chain: Probable GTP-binding protein EngB (194 aa).

Positions 19–193 (DCIQICFWGR…VLFIEENIFK (175 aa)) constitute an EngB-type G domain. GTP is bound by residues 27–34 (GRSNVGKS), 53–57 (GRTQF), 70–73 (DLPG), 137–140 (TKID), and 172–174 (VSS). Mg(2+) contacts are provided by Ser34 and Thr55.

The protein belongs to the TRAFAC class TrmE-Era-EngA-EngB-Septin-like GTPase superfamily. EngB GTPase family. Requires Mg(2+) as cofactor.

In terms of biological role, necessary for normal cell division and for the maintenance of normal septation. The polypeptide is Probable GTP-binding protein EngB (Mycoplasmopsis agalactiae (strain NCTC 10123 / CIP 59.7 / PG2) (Mycoplasma agalactiae)).